The primary structure comprises 519 residues: Na(+)/H(+) exchange regulatory cofactor NHE-RF3 (519 aa).

Residues 9–90 form the PDZ 1 domain; sequence ECKLSKQEGQ…SVTLLVLDGD (82 aa). Ser-108, Ser-148, Ser-192, Ser-250, Ser-334, and Ser-348 each carry phosphoserine. 2 PDZ domains span residues 128–215 and 243–323; these read EPCA…VDKE and VVVI…LDKE. The interval 348–374 is disordered; it reads SVKEGPAPIPAPLEATGSEPTEDAEGH. One can recognise a PDZ 4 domain in the interval 378 to 458; sequence LCRLLKEDDS…HVTLLVCGKM (81 aa). Phosphothreonine is present on residues Thr-451 and Thr-488. The interval 479 to 519 is disordered; the sequence is VAGPDEKGETSAESEHDAHPAKDRTLSTASHSSSNSEDTEM. The span at 482–503 shows a compositional bias: basic and acidic residues; it reads PDEKGETSAESEHDAHPAKDRT. Phosphoserine occurs at positions 489 and 492. Residue Thr-503 is modified to Phosphothreonine. The segment covering 505 to 519 has biased composition (low complexity); it reads STASHSSSNSEDTEM. Residues Ser-508, Ser-510, Ser-511, Ser-512, and Ser-514 each carry the phosphoserine modification.

Belongs to the NHER family. In terms of assembly, interacts with PDZK1IP1 and ABCC2. Binds to the C-terminal region of SLC26A3. Interacts (via C-terminal PDZ domain) with SLC26A6 (via C-terminal domain). Interacts (via C-terminal PDZ domain) with SLC9A3 (via C-terminal domain). Component of a complex, composed of PDZK1, SYNGAP1, KLHL17 and NMDA receptors. Interacts (via PDZ1 domain) directly with KLHL17; the interaction is important for integrity of actin cytoskeleton structures in neurons. Forms a heterodimeric complex with NHERF1. Interacts with AKAP2, BCR, CFTR, SLCO1A1, SLC22A12, SLC22A4, SLC22A5, SLC26A6, NHERF2 and SLC17A1. Interacts (via the first PDZ domain) with PTGIR (via non-isoprenylated C-terminus). Interacts (via PDZ domains 1 and 3) with SCARB1 (C-terminal domain). Interacts (via PDZ domains 1 and 3) with SLC5A8 (via PDZ-binding motif); interaction increases nicotinate transport activity of SLC5A8. As to expression, expressed in kidney, liver, small intestine. brain, lung, and testis (at protein level).

Its subcellular location is the membrane. It is found in the cell membrane. Its function is as follows. A scaffold protein that connects plasma membrane proteins and regulatory components, regulating their surface expression in epithelial cells apical domains. May be involved in the coordination of a diverse range of regulatory processes for ion transport and second messenger cascades. In complex with NHERF1, may cluster proteins that are functionally dependent in a mutual fashion and modulate the trafficking and the activity of the associated membrane proteins. May play a role in the cellular mechanisms associated with multidrug resistance through its interaction with ABCC2 and PDZK1IP1. May potentiate the CFTR chloride channel activity. Required for normal cell-surface expression of SCARB1. Plays a role in maintaining normal plasma cholesterol levels via its effects on SCARB1. Plays a role in the normal localization and function of the chloride-anion exchanger SLC26A6 to the plasma membrane in the brush border of the proximal tubule of the kidney. May be involved in the regulation of proximal tubular Na(+)-dependent inorganic phosphate cotransport therefore playing an important role in tubule function. The sequence is that of Na(+)/H(+) exchange regulatory cofactor NHE-RF3 (Pdzk1) from Mus musculus (Mouse).